The following is a 203-amino-acid chain: NAD(P)H dehydrogenase (quinone) (203 aa).

Positions 3–194 (IMVVYYSAYG…AGANFQGRHV (192 aa)) constitute a Flavodoxin-like domain. FMN-binding positions include 9 to 14 (SAYGHV) and 82 to 84 (ARF). Residue Y11 participates in NAD(+) binding. W102 serves as a coordination point for substrate. Residues 117-123 (STGTQHG) and H138 contribute to the FMN site.

It belongs to the WrbA family. FMN is required as a cofactor.

It carries out the reaction a quinone + NADH + H(+) = a quinol + NAD(+). The enzyme catalyses a quinone + NADPH + H(+) = a quinol + NADP(+). This Syntrophus aciditrophicus (strain SB) protein is NAD(P)H dehydrogenase (quinone).